Reading from the N-terminus, the 122-residue chain is Large ribosomal subunit protein uL14 (122 aa).

This sequence belongs to the universal ribosomal protein uL14 family. In terms of assembly, part of the 50S ribosomal subunit. Forms a cluster with proteins L3 and L19. In the 70S ribosome, L14 and L19 interact and together make contacts with the 16S rRNA in bridges B5 and B8.

Its function is as follows. Binds to 23S rRNA. Forms part of two intersubunit bridges in the 70S ribosome. The polypeptide is Large ribosomal subunit protein uL14 (Desulfitobacterium hafniense (strain DSM 10664 / DCB-2)).